Here is a 389-residue protein sequence, read N- to C-terminus: SH2 domain-containing protein 2A (389 aa).

Residues 41-63 (AASPQAPEAASNTGNAERAEEVP) are disordered. In terms of domain architecture, SH2 spans 95-186 (WFHGFITRRE…PYGETLTEPL (92 aa)). Residues 190–295 (TPEPAGLSLR…PIAFYAMGRG (106 aa)) form a disordered region. Residues 203 to 216 (SNFGSKSQDPNPQY) show a composition bias toward polar residues. Ser-217 bears the Phosphoserine mark. 2 short sequence motifs (SH3-binding) span residues 244-250 (RPKPPIP) and 272-278 (RPKPSNP). The segment covering 245–256 (PKPPIPAKPQLP) has biased composition (pro residues). At Ser-296 the chain carries Phosphoserine. The tract at residues 324–389 (KSWSRPVPGG…QAWLPLGPPQ (66 aa)) is disordered. The span at 337 to 348 (GGSQLHSENSVI) shows a compositional bias: polar residues. Over residues 352-361 (PPLPHQPPPA) the composition is skewed to pro residues.

As to quaternary structure, interacts with KDR. Interacts with TXK and ITK. In terms of processing, phosphorylated on tyrosine residues. In terms of tissue distribution, expression limited to tissues of the immune system and, in particular, activated T-cells. Expressed in peripheral blood leukocytes, thymus and spleen. Much lower expression or undetectable, in brain, placenta, skeletal muscle, prostate, testis, ovary, small intestine, and colon. Expressed at low levels in unstimulated T-cells, but not expressed in normal resting or activated B-cells. According to PubMed:10692392, expression is not restricted to activated T-cells, but strongly expressed in blood cell lineages, the endothelium and other cell and tissue types, such as heart, lung, and liver.

The protein resides in the cytoplasm. Its function is as follows. Could be a T-cell-specific adapter protein involved in the control of T-cell activation. May play a role in the CD4-p56-LCK-dependent signal transduction pathway. Could also play an important role in normal and pathological angiogenesis. Could be an adapter protein that facilitates and regulates interaction of KDR with effector proteins important to endothelial cell survival and proliferation. This is SH2 domain-containing protein 2A (SH2D2A) from Homo sapiens (Human).